Reading from the N-terminus, the 41-residue chain is Large ribosomal subunit protein bL36 (41 aa).

It belongs to the bacterial ribosomal protein bL36 family.

This chain is Large ribosomal subunit protein bL36 (rpmJ), found in Agrobacterium fabrum (strain C58 / ATCC 33970) (Agrobacterium tumefaciens (strain C58)).